The following is a 204-amino-acid chain: Guanylate kinase (204 aa).

One can recognise a Guanylate kinase-like domain in the interval 1–182 (MLYIISAPSG…ALSDLNTIIC (182 aa)). Position 7 to 14 (7 to 14 (APSGTGKS)) interacts with ATP.

It belongs to the guanylate kinase family.

It is found in the cytoplasm. The catalysed reaction is GMP + ATP = GDP + ADP. In terms of biological role, essential for recycling GMP and indirectly, cGMP. This is Guanylate kinase from Baumannia cicadellinicola subsp. Homalodisca coagulata.